We begin with the raw amino-acid sequence, 469 residues long: Cholesterol 7-desaturase nvd (469 aa).

The N-terminal stretch at 1-25 (MASFCASKFLPGLLMLGLGLAVALA) is a signal peptide. The helical transmembrane segment at 58–78 (NFVASQTLLTLTIFGVASFIL) threads the bilayer. The Rieske domain maps to 132 to 238 (IPLVASQDLV…VIEQNGFVLV (107 aa)). 4 residues coordinate [2Fe-2S] cluster: Cys172, His174, Cys192, and His195.

Belongs to the cholesterol 7-desaturase family. Requires [2Fe-2S] cluster as cofactor.

The protein localises to the membrane. The enzyme catalyses cholesterol + NADPH + O2 + H(+) = 7-dehydrocholesterol + NADP(+) + 2 H2O. It carries out the reaction cholesterol + NADH + O2 + H(+) = 7-dehydrocholesterol + NAD(+) + 2 H2O. It functions in the pathway steroid hormone biosynthesis; dafachronic acid biosynthesis. In terms of biological role, catalyzes the production of 7-dehydrocholesterol (7-DHC or cholesta-5,7-dien-3beta-ol) by inserting a double bond (desaturating) at the C7-C8 single bond of cholesterol. Essential regulator of steroid biosynthesis as this reaction is the first step in the synthesis of the steroid hormone Delta(7)-dafachronic acid. The protein is Cholesterol 7-desaturase nvd of Hemicentrotus pulcherrimus (Sea urchin).